The following is a 277-amino-acid chain: Shikimate dehydrogenase (NADP(+)) (277 aa).

Residues 15–17 (SLS) and Thr62 contribute to the shikimate site. The active-site Proton acceptor is Lys66. Shikimate contacts are provided by Asn87 and Asp102. Residues 127–131 (GAGGA), 151–156 (NRTVDK), and Ile219 contribute to the NADP(+) site. Tyr221 lines the shikimate pocket. Gly242 lines the NADP(+) pocket.

The protein belongs to the shikimate dehydrogenase family. Homodimer.

The enzyme catalyses shikimate + NADP(+) = 3-dehydroshikimate + NADPH + H(+). It participates in metabolic intermediate biosynthesis; chorismate biosynthesis; chorismate from D-erythrose 4-phosphate and phosphoenolpyruvate: step 4/7. Its function is as follows. Involved in the biosynthesis of the chorismate, which leads to the biosynthesis of aromatic amino acids. Catalyzes the reversible NADPH linked reduction of 3-dehydroshikimate (DHSA) to yield shikimate (SA). This is Shikimate dehydrogenase (NADP(+)) from Bacillus cereus (strain ATCC 10987 / NRS 248).